We begin with the raw amino-acid sequence, 345 residues long: 4-hydroxyproline 2-epimerase (345 aa).

Glutamine 85 is a substrate binding site. Catalysis depends on serine 93, which acts as the Proton acceptor. Residues 94–95 (GS) and aspartate 251 each bind substrate. Cysteine 255 serves as the catalytic Proton donor. 256–257 (GT) is a substrate binding site.

It belongs to the proline racemase family.

It catalyses the reaction trans-4-hydroxy-L-proline = cis-4-hydroxy-D-proline. Functionally, catalyzes the epimerization of trans-4-hydroxy-L-proline (t4LHyp) to cis-4-hydroxy-D-proline (c4DHyp). May be involved in a degradation pathway of t4LHyp. Can also catalyze the epimerization of trans-3-hydroxy-L-proline (t3LHyp) to cis-3-hydroxy-D-proline (c3DHyp) in vitro, albeit with 2-fold lower efficiency. Displays no proline racemase activity. This chain is 4-hydroxyproline 2-epimerase, found in Rhizobium etli (strain ATCC 51251 / DSM 11541 / JCM 21823 / NBRC 15573 / CFN 42).